Consider the following 833-residue polypeptide: MutS protein homolog 5 (833 aa).

Residues 1-45 (MAFRATPGRTPPGPGPRSGIPSASFPSPQPPMAGPGGIEEEDEEE) form a disordered region. 591 to 598 (GPNSSGKS) is an ATP binding site.

The protein belongs to the DNA mismatch repair MutS family. As to quaternary structure, heterooligomer of MSH4 and MSH5. Interacts with HJURP. Interacts with REDIC1.

Involved in DNA mismatch repair and meiotic recombination processes. Facilitates crossovers between homologs during meiosis. This Mus musculus (Mouse) protein is MutS protein homolog 5 (Msh5).